Here is a 289-residue protein sequence, read N- to C-terminus: Porin (289 aa).

As to quaternary structure, homotrimer.

It is found in the cell outer membrane. Its function is as follows. Forms channels that allow the passive diffusion of small hydrophilic solutes up to an exclusion limit of about 0.6 kDa. The protein is Porin (opmA) of Fuscovulum blasticum (Rhodobacter blasticus).